The following is a 480-amino-acid chain: Proline--tRNA ligase (480 aa).

Belongs to the class-II aminoacyl-tRNA synthetase family. ProS type 3 subfamily. Homodimer.

The protein resides in the cytoplasm. The enzyme catalyses tRNA(Pro) + L-proline + ATP = L-prolyl-tRNA(Pro) + AMP + diphosphate. Catalyzes the attachment of proline to tRNA(Pro) in a two-step reaction: proline is first activated by ATP to form Pro-AMP and then transferred to the acceptor end of tRNA(Pro). The chain is Proline--tRNA ligase from Chloroflexus aggregans (strain MD-66 / DSM 9485).